Consider the following 246-residue polypeptide: Mitochondrial inner membrane protease ATP23 homolog (246 aa).

Residue histidine 125 coordinates a divalent metal cation. The active site involves glutamate 126. Histidine 129 lines the a divalent metal cation pocket.

Belongs to the peptidase M76 family. Interacts with XRCC6.

This Homo sapiens (Human) protein is Mitochondrial inner membrane protease ATP23 homolog.